We begin with the raw amino-acid sequence, 308 residues long: MAALGGDGLRLLSVSRPERQPESAALSSPGPGLCCWVSVFSCFSLACSYVGSLYVWKSELPRDHPAVIKRRFTSVLVVSSLSPLCVLLWRELTGIQPGTSLLTLMGFRLEGIFPAALLPLLLTMILFLGPLMQLCMDCPCDLTDGLKVVLAPRSWARRLTDMRWLRNQVIAPLTEELVFRACMLPMLAPCTGLGPAVFTCPLFFGVAHFHHIIEQLRFRQSSVGSIFLSAGHLIGPVLCHSFCNYMGFPAVCAALEHPQKWPLLAGYALGVGLFLLLLQPLTDPKLYGSLPLCMLLERTGASETLLCS.

The residue at position 2 (Ala2) is an N-acetylalanine. 3 helical membrane passes run Ala25 to Leu45, Val75 to Ile95, and Ile112 to Met132. Glu175 functions as the Proton donor/acceptor in the catalytic mechanism. The helical transmembrane segment at Met186–Val206 threads the bilayer. His208 serves as the catalytic Proton donor/acceptor. A run of 2 helical transmembrane segments spans residues Leu233–Ala253 and Pro262–Thr282.

Belongs to the peptidase U48 family. Post-translationally, ubiquitinated. Undergoes 'Lys-48'- and 'Lys-63'-linked ubiquitination. 'Lys-48' ubiquitination induces its degradation. Deubiquitinated by USP17L2/USP17 that cleaves 'Lys-63'-linked ubiquitin chains.

The protein localises to the endoplasmic reticulum membrane. The catalysed reaction is Hydrolyzes the peptide bond -P2-(S-farnesyl or geranylgeranyl)C-P1'-P2'-P3'-COOH where P1' and P2' are amino acids with aliphatic sidechains and P3' is any C-terminal residue.. Its activity is regulated as follows. Deubiquitination by USP17L2/USP17 negatively regulates the proteolytic activity toward Ras GTPases. Its function is as follows. Protease involved in the processing of a variety of prenylated proteins containing the C-terminal CAAX motif, where C is a cysteine modified with an isoprenoid lipid, A is an aliphatic amino acid and X is any C-terminal amino acid. Proteolytically removes the C-terminal three residues of farnesylated and geranylated proteins, leaving the prenylated cysteine as the new C-terminus. Is able to process K-Ras, N-Ras, H-Ras, RAP1B and G-gamma-1. The polypeptide is CAAX prenyl protease 2 (Rce1) (Rattus norvegicus (Rat)).